Consider the following 300-residue polypeptide: tRNA pseudouridine synthase B (300 aa).

Catalysis depends on Asp-38, which acts as the Nucleophile.

The protein belongs to the pseudouridine synthase TruB family. Type 1 subfamily.

It catalyses the reaction uridine(55) in tRNA = pseudouridine(55) in tRNA. Functionally, responsible for synthesis of pseudouridine from uracil-55 in the psi GC loop of transfer RNAs. The sequence is that of tRNA pseudouridine synthase B from Dehalococcoides mccartyi (strain ATCC BAA-2100 / JCM 16839 / KCTC 5957 / BAV1).